A 281-amino-acid chain; its full sequence is ATP phosphoribosyltransferase (281 aa).

The protein belongs to the ATP phosphoribosyltransferase family. Long subfamily. In terms of assembly, equilibrium between an active dimeric form, an inactive hexameric form and higher aggregates. Interconversion between the various forms is largely reversible and is influenced by the natural substrates and inhibitors of the enzyme. Requires Mg(2+) as cofactor.

The protein localises to the cytoplasm. It catalyses the reaction 1-(5-phospho-beta-D-ribosyl)-ATP + diphosphate = 5-phospho-alpha-D-ribose 1-diphosphate + ATP. Its pathway is amino-acid biosynthesis; L-histidine biosynthesis; L-histidine from 5-phospho-alpha-D-ribose 1-diphosphate: step 1/9. With respect to regulation, feedback inhibited by histidine. Its function is as follows. Catalyzes the condensation of ATP and 5-phosphoribose 1-diphosphate to form N'-(5'-phosphoribosyl)-ATP (PR-ATP). Has a crucial role in the pathway because the rate of histidine biosynthesis seems to be controlled primarily by regulation of HisG enzymatic activity. The protein is ATP phosphoribosyltransferase of Mycolicibacterium gilvum (strain PYR-GCK) (Mycobacterium gilvum (strain PYR-GCK)).